We begin with the raw amino-acid sequence, 286 residues long: Polyamine aminopropyltransferase (286 aa).

A PABS domain is found at Pro-6 to Asp-239. An S-methyl-5'-thioadenosine-binding site is contributed by Gln-34. 2 residues coordinate spermidine: His-65 and Asp-89. S-methyl-5'-thioadenosine contacts are provided by residues Glu-109 and Asp-140–Gly-141. The Proton acceptor role is filled by Asp-159. Asp-159–Asp-162 is a binding site for spermidine. Pro-166 contacts S-methyl-5'-thioadenosine.

Belongs to the spermidine/spermine synthase family. As to quaternary structure, homodimer or homotetramer. Homodimer.

It localises to the cytoplasm. The enzyme catalyses S-adenosyl 3-(methylsulfanyl)propylamine + putrescine = S-methyl-5'-thioadenosine + spermidine + H(+). The protein operates within amine and polyamine biosynthesis; spermidine biosynthesis; spermidine from putrescine: step 1/1. Functionally, catalyzes the irreversible transfer of a propylamine group from the amino donor S-adenosylmethioninamine (decarboxy-AdoMet) to putrescine (1,4-diaminobutane) to yield spermidine. The chain is Polyamine aminopropyltransferase from Synechococcus elongatus (strain ATCC 33912 / PCC 7942 / FACHB-805) (Anacystis nidulans R2).